We begin with the raw amino-acid sequence, 279 residues long: 4-hydroxy-3-methylbut-2-enyl diphosphate reductase (279 aa).

A [4Fe-4S] cluster-binding site is contributed by cysteine 12. Histidine 41 and histidine 74 together coordinate (2E)-4-hydroxy-3-methylbut-2-enyl diphosphate. The dimethylallyl diphosphate site is built by histidine 41 and histidine 74. Residues histidine 41 and histidine 74 each contribute to the isopentenyl diphosphate site. Cysteine 96 lines the [4Fe-4S] cluster pocket. Residue histidine 124 participates in (2E)-4-hydroxy-3-methylbut-2-enyl diphosphate binding. Histidine 124 contributes to the dimethylallyl diphosphate binding site. Histidine 124 lines the isopentenyl diphosphate pocket. Glutamate 126 acts as the Proton donor in catalysis. Threonine 164 contacts (2E)-4-hydroxy-3-methylbut-2-enyl diphosphate. Cysteine 192 contributes to the [4Fe-4S] cluster binding site. The (2E)-4-hydroxy-3-methylbut-2-enyl diphosphate site is built by serine 220, serine 221, asparagine 222, and serine 263. The dimethylallyl diphosphate site is built by serine 220, serine 221, asparagine 222, and serine 263. Isopentenyl diphosphate contacts are provided by serine 220, serine 221, asparagine 222, and serine 263.

Belongs to the IspH family. [4Fe-4S] cluster is required as a cofactor.

It catalyses the reaction isopentenyl diphosphate + 2 oxidized [2Fe-2S]-[ferredoxin] + H2O = (2E)-4-hydroxy-3-methylbut-2-enyl diphosphate + 2 reduced [2Fe-2S]-[ferredoxin] + 2 H(+). The enzyme catalyses dimethylallyl diphosphate + 2 oxidized [2Fe-2S]-[ferredoxin] + H2O = (2E)-4-hydroxy-3-methylbut-2-enyl diphosphate + 2 reduced [2Fe-2S]-[ferredoxin] + 2 H(+). The protein operates within isoprenoid biosynthesis; dimethylallyl diphosphate biosynthesis; dimethylallyl diphosphate from (2E)-4-hydroxy-3-methylbutenyl diphosphate: step 1/1. It participates in isoprenoid biosynthesis; isopentenyl diphosphate biosynthesis via DXP pathway; isopentenyl diphosphate from 1-deoxy-D-xylulose 5-phosphate: step 6/6. Functionally, catalyzes the conversion of 1-hydroxy-2-methyl-2-(E)-butenyl 4-diphosphate (HMBPP) into a mixture of isopentenyl diphosphate (IPP) and dimethylallyl diphosphate (DMAPP). Acts in the terminal step of the DOXP/MEP pathway for isoprenoid precursor biosynthesis. The polypeptide is 4-hydroxy-3-methylbut-2-enyl diphosphate reductase (Clostridioides difficile (strain 630) (Peptoclostridium difficile)).